The following is a 162-amino-acid chain: 2-C-methyl-D-erythritol 2,4-cyclodiphosphate synthase (162 aa).

Asp9 and His11 together coordinate a divalent metal cation. 4-CDP-2-C-methyl-D-erythritol 2-phosphate-binding positions include 9–11 (DFH) and 37–38 (HS). His45 contacts a divalent metal cation. 4-CDP-2-C-methyl-D-erythritol 2-phosphate is bound by residues 59–61 (DIG), 64–68 (FPDTD), 135–138 (TTSE), and Arg145.

It belongs to the IspF family. Homotrimer. Requires a divalent metal cation as cofactor.

It catalyses the reaction 4-CDP-2-C-methyl-D-erythritol 2-phosphate = 2-C-methyl-D-erythritol 2,4-cyclic diphosphate + CMP. Its pathway is isoprenoid biosynthesis; isopentenyl diphosphate biosynthesis via DXP pathway; isopentenyl diphosphate from 1-deoxy-D-xylulose 5-phosphate: step 4/6. In terms of biological role, involved in the biosynthesis of isopentenyl diphosphate (IPP) and dimethylallyl diphosphate (DMAPP), two major building blocks of isoprenoid compounds. Catalyzes the conversion of 4-diphosphocytidyl-2-C-methyl-D-erythritol 2-phosphate (CDP-ME2P) to 2-C-methyl-D-erythritol 2,4-cyclodiphosphate (ME-CPP) with a corresponding release of cytidine 5-monophosphate (CMP). The sequence is that of 2-C-methyl-D-erythritol 2,4-cyclodiphosphate synthase from Leptospira biflexa serovar Patoc (strain Patoc 1 / Ames).